The following is a 327-amino-acid chain: Zinc transport protein ZntB (327 aa).

Residues 1–271 (MDVVAGKALQ…AMNRRTYTMS (271 aa)) lie on the Cytoplasmic side of the membrane. Residues 272 to 292 (LLAMVFLPTTFLTGLFGVNLG) form a helical membrane-spanning segment. At 293-300 (GIPGNTDS) the chain is on the periplasmic side. A helical membrane pass occupies residues 301-321 (FGFATFCMMLVVLVLGVAWWL). Over 322-327 (KHSKWL) the chain is Cytoplasmic.

It belongs to the CorA metal ion transporter (MIT) (TC 1.A.35) family.

It is found in the cell inner membrane. The enzyme catalyses Zn(2+)(out) + H(+)(out) = Zn(2+)(in) + H(+)(in). Zinc transporter. Acts as a Zn(2+):proton symporter, which likely mediates zinc ion uptake. This is Zinc transport protein ZntB from Yersinia enterocolitica serotype O:8 / biotype 1B (strain NCTC 13174 / 8081).